Reading from the N-terminus, the 509-residue chain is MRILAVTAEMFPFVKTGGLADATSALPQALERKGADVRTLLPLYRGLTPLVRGRKPVLVANILEQPVSVYYVVSDGHKLLLLEAASLFDRDGHPYGVKGEPFADNDLRFAVLSKVAAEIALGAIDGWQPDVVHVHDWHAALTCVYLADSTPSVASVLTLHNLAFQGQYPLERAGMLGLPSHLCTVDCLEYYDDMSFLKGGLTTASAVTTVSPTYAREILTPEMGMGMHGVLARRRGDLRGIVNGVDHDVWNPATDPYILANFTAATATRRSLNKYALLQALGLAPTQGPVFGVVSRLTWQKGIDLLPHVVPLIIERKGRLIVHGEGDTALEDSLQALAKRYPELVCAHIGYDERLAHMIQAGSDFIIQPSRFEPCGLTQLYALRYGALPIVSRTGGLAETIIDANDAAIEAGVATGFQFEPANEDDLRAALERAISAYNDRELFRRLQTQAMQANFSWDKSAAQYMALFESLVGNSTRETDAVADIRTETFAKIRADRRLAGTPGSPTG.

Residue Lys15 participates in ADP-alpha-D-glucose binding.

It belongs to the glycosyltransferase 1 family. Bacterial/plant glycogen synthase subfamily.

It catalyses the reaction [(1-&gt;4)-alpha-D-glucosyl](n) + ADP-alpha-D-glucose = [(1-&gt;4)-alpha-D-glucosyl](n+1) + ADP + H(+). Its pathway is glycan biosynthesis; glycogen biosynthesis. Functionally, synthesizes alpha-1,4-glucan chains using ADP-glucose. This Agrobacterium fabrum (strain C58 / ATCC 33970) (Agrobacterium tumefaciens (strain C58)) protein is Glycogen synthase 2 (glgA2).